A 257-amino-acid polypeptide reads, in one-letter code: Imidazole glycerol phosphate synthase subunit HisF (257 aa).

Residues Asp11 and Asp130 contribute to the active site.

The protein belongs to the HisA/HisF family. As to quaternary structure, heterodimer of HisH and HisF.

The protein localises to the cytoplasm. It carries out the reaction 5-[(5-phospho-1-deoxy-D-ribulos-1-ylimino)methylamino]-1-(5-phospho-beta-D-ribosyl)imidazole-4-carboxamide + L-glutamine = D-erythro-1-(imidazol-4-yl)glycerol 3-phosphate + 5-amino-1-(5-phospho-beta-D-ribosyl)imidazole-4-carboxamide + L-glutamate + H(+). The protein operates within amino-acid biosynthesis; L-histidine biosynthesis; L-histidine from 5-phospho-alpha-D-ribose 1-diphosphate: step 5/9. Functionally, IGPS catalyzes the conversion of PRFAR and glutamine to IGP, AICAR and glutamate. The HisF subunit catalyzes the cyclization activity that produces IGP and AICAR from PRFAR using the ammonia provided by the HisH subunit. The protein is Imidazole glycerol phosphate synthase subunit HisF of Xylella fastidiosa (strain M23).